The sequence spans 513 residues: MKIAYWMYAGPAHIGTLRVASSFKNVHAIMHAPLGDDYFNVMRSMLERERDFTPVTASIVDRHVLARGSQEKVVENITRKDKEERPDLIVLTPTCTSSILQEDLQNFVDRAAMTSQSDVILADVNHYRVNELQAADRTLEQVVRYYLDKAHRQENLNQPITEVPSVNIIGMFTLGFHNQHDCRELKRLFQDLGIKVNEVIPEGGSVENLRNLPKAWLNIVPYREVGLMTALYLEKEFGMPYVATTPMGIVDTAKFIREIQHHINKWAPILLGKVVDYEEYIDQQTRFVSQAAWFSRSIDCQNLTGKKAVVFGDTTHAAAMTKILAREMGVYVVCAGTYCKHDAEWFKDQVQGFCDEVLITDDHTEVGDMIARVEPAAIFGSQMERHIGKRLDIPCGVISAPVHIQNFPLGYRPFLGYEGTNQIADLVYNSFTLGMEDHLLEIFGGHDTKEVITKSLSTDSDLTWDPESQAELSKIPGFVRGKIKRNTEKFARQNGMSKITVEIMYAAKEALNA.

Asp-36 serves as a coordination point for [4Fe-4S] cluster. Asp-299 functions as the Proton donor in the catalytic mechanism. Residue Gly-434–Met-435 participates in substrate binding.

The protein belongs to the ChlB/BchB/BchZ family. In terms of assembly, protochlorophyllide reductase is composed of three subunits; ChlL, ChlN and ChlB. Forms a heterotetramer of two ChlB and two ChlN subunits. The cofactor is [4Fe-4S] cluster.

It localises to the plastid. It is found in the chloroplast. The catalysed reaction is chlorophyllide a + oxidized 2[4Fe-4S]-[ferredoxin] + 2 ADP + 2 phosphate = protochlorophyllide a + reduced 2[4Fe-4S]-[ferredoxin] + 2 ATP + 2 H2O. It participates in porphyrin-containing compound metabolism; chlorophyll biosynthesis (light-independent). In terms of biological role, component of the dark-operative protochlorophyllide reductase (DPOR) that uses Mg-ATP and reduced ferredoxin to reduce ring D of protochlorophyllide (Pchlide) to form chlorophyllide a (Chlide). This reaction is light-independent. The NB-protein (ChlN-ChlB) is the catalytic component of the complex. This Staurastrum punctulatum (Green alga) protein is Light-independent protochlorophyllide reductase subunit B.